The primary structure comprises 67 residues: Envelope small membrane protein (67 aa).

Residue glycine 2 is the site of N-myristoyl glycine; by host attachment. Residues 2–15 form an endoplasmic reticulum retention signal region; sequence GLVWSLISNSIQTI. Topologically, residues 2-27 are virion surface; sequence GLVWSLISNSIQTIIADFAISVIDAA. Residues 28–48 traverse the membrane as a helical segment; that stretch reads LFFLMLLALAVVTVFLFWLIV. At 49–67 the chain is on the intravirion side; it reads AIGRSLVARCSRGARYRPV.

The protein belongs to the arteriviridae E protein family. In terms of assembly, homomultimer. Associates with itself into higher-order structures, including dimers, trimers and tetramers. Associates with the GP2b-GP3-GP4 complex. In terms of processing, myristoylated. Not glycosylated.

Its subcellular location is the virion membrane. It is found in the host endoplasmic reticulum membrane. It localises to the host Golgi apparatus membrane. The protein resides in the secreted. Minor envelope protein. May function as a viroporin in the virion envelope that facilitates uncoating of the virus in order to release the genomic RNA into the cytoplasm for subsequent replication. This chain is Envelope small membrane protein (GP2a), found in Equidae (horses).